A 75-amino-acid chain; its full sequence is Cytochrome c oxidase assembly factor 5 (75 aa).

Residues 28–66 (QTDCVLQEGKSPKECLKEGYCKALQVTFFECKRSILDTR) form the CHCH domain. A Cx10C motif motif is present at residues 31–42 (CVLQEGKSPKEC). Disulfide bonds link C31–C58 and C42–C48. Positions 48 to 58 (CKALQVTFFEC) match the Cx9C motif motif.

This sequence belongs to the PET191 family.

Functionally, involved in an early step of the mitochondrial complex IV assembly process. This is Cytochrome c oxidase assembly factor 5 (coa5) from Xenopus tropicalis (Western clawed frog).